Consider the following 436-residue polypeptide: MKGFMIAAPASGSGKTTVTLGLLRALKRRGEVLAPVKAGPDYIDPAYHRAASGVDCFNLDPWAMRPELISALSSRMTESGARVLVAEGMMGLFDGAIDGKGSSADLARLLDLPVVLVVDCARQSHSIAALVWGFSQFRKDVLIEGVILNRVGSPRHEAMLRGALAPLGVPVLGALPRDPALSLPERHLGLVQADEHAGLESFLEQAADVMEAHIDMDALQTIWLRPKRYDAMANVARLKPLGNRIAVARDDAFAFAYMHLFEGWRRRGAEISFFSPLADEAPKADADAIYLPGGYPELHAQRLAGASRFRTAIGDAAARGVTVYGECGGYMVLGKTLEDAAGVHHPMLGLLPLETSFARRKLHLGYRLLEPLGGLPWDMPLKAHEFHYASIVREEKADRLFRVRDASGENLGEAGLRVGSVSGSFMHVIDFSGEAA.

In terms of domain architecture, GATase cobBQ-type spans 244–435 (RIAVARDDAF…MHVIDFSGEA (192 aa)). The active-site Nucleophile is the Cys-327.

Belongs to the CobB/CbiA family. The cofactor is Mg(2+).

It carries out the reaction hydrogenobyrinate + 2 L-glutamine + 2 ATP + 2 H2O = hydrogenobyrinate a,c-diamide + 2 L-glutamate + 2 ADP + 2 phosphate + 2 H(+). It participates in cofactor biosynthesis; adenosylcobalamin biosynthesis; cob(II)yrinate a,c-diamide from precorrin-2 (aerobic route): step 9/10. Its function is as follows. Catalyzes the ATP-dependent amidation of the two carboxylate groups at positions a and c of hydrogenobyrinate, using either L-glutamine or ammonia as the nitrogen source. The polypeptide is Hydrogenobyrinate a,c-diamide synthase (Brucella abortus biovar 1 (strain 9-941)).